The chain runs to 577 residues: Thrombomodulin (577 aa).

The N-terminal stretch at 1 to 16 is a signal peptide; the sequence is MLGIFFLGVLAPASLG. Over 17–517 the chain is Extracellular; it reads LSALAKLQPT…GPPSARPVHS (501 aa). The 137-residue stretch at 31-167 folds into the C-type lectin domain; it reads VEHECFALFQ…TETQGFLCEF (137 aa). The N-linked (GlcNAc...) asparagine glycan is linked to N113. C135 and C156 are oxidised to a cystine. 2 consecutive EGF-like domains span residues 240-280 and 283-323; these read GAWN…RSCA and VVQS…HRCE. N243 carries N-linked (GlcNAc...) asparagine glycosylation. 18 disulfides stabilise this stretch: C244-C255, C251-C264, C266-C279, C287-C295, C291-C307, C309-C322, C328-C339, C335-C348, C350-C361, C368-C377, C373-C387, C389-C403, C407-C416, C412-C424, C426-C438, C444-C454, C449-C463, and C465-C479. N256 carries an N-linked (GlcNAc...) asparagine glycan. The region spanning 324-362 is the EGF-like 3; calcium-binding domain; the sequence is DVDDCKQGPNPCPQLCVNTKGGFECFCYDGYELVDGECV. 2 EGF-like domains span residues 364–404 and 403–439; these read LLDP…HKCE and CEMF…SVCT. A glycan (N-linked (GlcNAc...) asparagine) is linked at N408. Positions 440–480 constitute an EGF-like 6; calcium-binding domain; the sequence is DIDECSQGECFTSECRNFPGSYECICGPDTALAGQISKDCD. The segment at 476-513 is disordered; the sequence is SKDCDPIPVREDTKEEEGSGEPPVSPTPGSPTGPPSAR. Over residues 477 to 492 the composition is skewed to basic and acidic residues; sequence KDCDPIPVREDTKEEE. The O-linked (Xyl...) (chondroitin sulfate) serine glycan is linked to S494. A compositionally biased stretch (pro residues) spans 498 to 512; that stretch reads PVSPTPGSPTGPPSA. The helical transmembrane segment at 518 to 541 threads the bilayer; the sequence is GVLIGISIASLSLVVALLALLCHL. Residues 542-577 lie on the Cytoplasmic side of the membrane; the sequence is RKKQGAARAELEYKCASSAKEVVLQHVRTDRTLQKF.

As to quaternary structure, interacts with ITGAL, ITGAM and ITGB2. Interacts with thrombin/F2; this interaction switches the specificity of thrombin from a procoagulant to an anticoagulant and antifibrinolytic protease. Interacts with ANGP1 and ANGP2; these interactions significantly inhibit the generation of activated PC and TAFIa/CPB2 by the thrombin/thrombomodulin complex. Interacts with PF4; this interaction enhances generation of activated protein C. Interacts with HMGB1; this interaction inhibits HMGB1 inflammatory activity. Endothelial cells are unique in synthesizing thrombomodulin.

It localises to the membrane. In terms of biological role, endothelial cell receptor that plays a critical role in regulating several physiological processes including hemostasis, coagulation, fibrinolysis, inflammation, and angiogenesis. Acts as a cofactor for thrombin activation of protein C/PROC on the surface of vascular endothelial cells leading to initiation of the activated protein C anticoagulant pathway. Also accelerates the activation of the plasma carboxypeptidase B2/CPB2, which catalyzes removal of C-terminal basic amino acids from its substrates including kinins or anaphylatoxins leading to fibrinolysis inhibition. Plays critical protective roles in changing the cleavage specificity of protease-activated receptor 1/PAR1, inhibiting endothelial cell permeability and inflammation. Suppresses inflammation distinctly from its anticoagulant cofactor activity by sequestering HMGB1 thereby preventing it from engaging cellular receptors such as RAGE and contributing to the inflammatory response. In Mus musculus (Mouse), this protein is Thrombomodulin (Thbd).